The primary structure comprises 792 residues: MTKKRTVKRKVKEPEPTKEQPSVSEQSENEEDEDLLQAVKDPGEDTTDDEGIDQEYQSDSSEDLEFESDEEGNYLGRKVSNEAEEGEDDQDEDDDEDEDEGEDEDDDSDDDSEESDANEASATPKDDQPSSSKAAAAQTKEPIIQIIPRDPSKPEYEESDTSDEEDIRNTVGNIPMHWYDEYKHIGYDWDAKKIIKPPKGDQIDDFLRKIEDPNFWRTVKDPMTGQEVLLTDEDIALIKRVNSSRIPNPEHDEYAPWIEWFTSEVEKMPIKNVPDHKRSFLPSVSEKKKVSRMVHALKMGWMKTTEEVEREKQQKRGPKFYMLWETDTGREHMRRIHDPVSAPKRDLPGHAESYNPPPEYLFDEKETKEWLKLKDEPHKRKLHFMPQKYKSLRAVPAYSRYLRERFLRCLDLYLCPRAKRVKLNIDAEYLIPKLPSPRDLQPFPTVESLVYRGHTDLVRSVSVEPKGEYLVSGSDDKTVKIWEIATGRCIRTIETNDVVRCVAWCPNAKLSIIAVATGSRLLLINPKVGDKLLIKKTDDLLAESPNLDIIESERIKTAVQWSNAEPDEQEKGVRVVITHFKPIRQVTWHGRGDYLATVMPEGANRSALIHQLSKRRSQIPFSKSKGLIQCVLFHPVKPCFFVATQHNIRIYDLVKQELIKKLLTNSKWISGMSIHPKGDNLLVSTYDKKMLWFDLDLSTKPYQTMRLHRNAVRSVAFHLRYPLFASGSDDQAVIVSHGMVYNDLLQNPLIVPLKKLQTHEKRDEFGVLDVTWHPVQPWVFSTGADCTIRLYT.

The span at 1–11 (MTKKRTVKRKV) shows a compositional bias: basic residues. The interval 1–167 (MTKKRTVKRK…ESDTSDEEDI (167 aa)) is disordered. Acidic residues-rich tracts occupy residues 44–53 (EDTTDDEGID), 60–72 (SSEDLEFESDEEG), 82–117 (EAEEGEDDQDEDDDEDEDEGEDEDDDSDDDSEESDA), and 157–166 (EESDTSDEED). 7 WD repeats span residues 453–494 (GHTD…RTIE), 496–534 (NDVVRCVAWCPNAKLSIIAVATGSRLLLINPKVGDKLLI), 578–620 (THFK…SQIP), 623–661 (KSKGLIQCVLFHPVKPCFFVATQHNIRIYDLVKQELIKK), 664–703 (TNSKWISGMSIHPKGDNLLVSTYDKKMLWFDLDLSTKPYQ), 707–746 (LHRNAVRSVAFHLRYPLFASGSDDQAVIVSHGMVYNDLLQ), and 762–792 (RDEFGVLDVTWHPVQPWVFSTGADCTIRLYT).

It belongs to the WD repeat BOP1/ERB1 family.

The protein resides in the nucleus. Its subcellular location is the nucleolus. The protein localises to the nucleoplasm. Its function is as follows. Required for maturation of ribosomal RNAs and formation of the large ribosomal subunit. The polypeptide is Ribosome biogenesis protein BOP1 homolog (Drosophila mojavensis (Fruit fly)).